A 200-amino-acid chain; its full sequence is Small ribosomal subunit protein eS1 (200 aa).

The protein belongs to the eukaryotic ribosomal protein eS1 family. Part of the 30S ribosomal subunit.

This is Small ribosomal subunit protein eS1 from Thermococcus kodakarensis (strain ATCC BAA-918 / JCM 12380 / KOD1) (Pyrococcus kodakaraensis (strain KOD1)).